Consider the following 543-residue polypeptide: Sodium/glucose cotransporter (543 aa).

A run of 14 helical transmembrane segments spans residues 10–30 (FIDI…GLWV), 45–65 (FLAG…AANI), 79–99 (SIGL…IIVG), 129–149 (ILAV…VLYL), 156–176 (TILG…ALVY), 193–213 (VFFL…FIGG), 246–266 (LPGI…YWGF), 287–307 (IVFA…PGIA), 345–365 (FLPV…IVSS), 401–421 (TAAV…GGIG), 427–447 (IQEY…LGLF), 455–475 (GAII…FMPL), 483–503 (MLYT…STSI), and 523–543 (SFNI…TLFW).

Its subcellular location is the cell membrane. Its function is as follows. Actively transports glucose into cells by Na(+) cotransport. This is Sodium/glucose cotransporter (sglT) from Vibrio parahaemolyticus.